A 393-amino-acid chain; its full sequence is NAD(P)H-quinone oxidoreductase subunit H, chloroplastic (393 aa).

Belongs to the complex I 49 kDa subunit family. In terms of assembly, NDH is composed of at least 16 different subunits, 5 of which are encoded in the nucleus.

The protein resides in the plastid. It is found in the chloroplast thylakoid membrane. It catalyses the reaction a plastoquinone + NADH + (n+1) H(+)(in) = a plastoquinol + NAD(+) + n H(+)(out). The enzyme catalyses a plastoquinone + NADPH + (n+1) H(+)(in) = a plastoquinol + NADP(+) + n H(+)(out). NDH shuttles electrons from NAD(P)H:plastoquinone, via FMN and iron-sulfur (Fe-S) centers, to quinones in the photosynthetic chain and possibly in a chloroplast respiratory chain. The immediate electron acceptor for the enzyme in this species is believed to be plastoquinone. Couples the redox reaction to proton translocation, and thus conserves the redox energy in a proton gradient. The polypeptide is NAD(P)H-quinone oxidoreductase subunit H, chloroplastic (Oenothera argillicola (Appalachian evening primrose)).